A 168-amino-acid chain; its full sequence is ATP synthase subunit b (168 aa).

A helical membrane pass occupies residues 10–30 (LYLGDMLFYLVSFLIMAALVW). Positions 61–80 (EAQKLAAKRQEELKGSRQEA) are disordered.

It belongs to the ATPase B chain family. As to quaternary structure, F-type ATPases have 2 components, F(1) - the catalytic core - and F(0) - the membrane proton channel. F(1) has five subunits: alpha(3), beta(3), gamma(1), delta(1), epsilon(1). F(0) has three main subunits: a(1), b(2) and c(10-14). The alpha and beta chains form an alternating ring which encloses part of the gamma chain. F(1) is attached to F(0) by a central stalk formed by the gamma and epsilon chains, while a peripheral stalk is formed by the delta and b chains.

Its subcellular location is the cell membrane. In terms of biological role, f(1)F(0) ATP synthase produces ATP from ADP in the presence of a proton or sodium gradient. F-type ATPases consist of two structural domains, F(1) containing the extramembraneous catalytic core and F(0) containing the membrane proton channel, linked together by a central stalk and a peripheral stalk. During catalysis, ATP synthesis in the catalytic domain of F(1) is coupled via a rotary mechanism of the central stalk subunits to proton translocation. Component of the F(0) channel, it forms part of the peripheral stalk, linking F(1) to F(0). The protein is ATP synthase subunit b of Limosilactobacillus fermentum (strain NBRC 3956 / LMG 18251) (Lactobacillus fermentum).